Consider the following 653-residue polypeptide: Fusexin 1 (653 aa).

Residues Met1–Ala23 form the signal peptide. The Extracellular portion of the chain corresponds to Ala24–Gly559. Intrachain disulfides connect Cys126–Cys166, Cys397–Cys440, Cys467–Cys490, and Cys502–Cys519. Positions Asp154–Gln159 are fusion loop. Residues Ala560 to Val580 traverse the membrane as a helical segment. The Cytoplasmic portion of the chain corresponds to Gly581–Asp600. 2 helical membrane-spanning segments follow: residues Ala601–Gln621 and Leu622–Leu642. The Cytoplasmic portion of the chain corresponds to Tyr643–Leu653.

It belongs to the HAP2/GCS1 family. Fusexin 1 subfamily. As to quaternary structure, homotrimer stabilized by interdomain contacts and numerous Ca(2+) and Na(+) ions.

Its subcellular location is the cell surface. The protein resides in the cell membrane. Exhibits fusogenic activity. Mediates cell-cell fusion in mammalian cells (bilateral fusion). This Haloferax sp. (strain Q22) protein is Fusexin 1.